Reading from the N-terminus, the 105-residue chain is Co-chaperonin GroES 3 (105 aa).

This sequence belongs to the GroES chaperonin family. As to quaternary structure, heptamer of 7 subunits arranged in a ring. Interacts with the chaperonin GroEL.

Its subcellular location is the cytoplasm. Together with the chaperonin GroEL, plays an essential role in assisting protein folding. The GroEL-GroES system forms a nano-cage that allows encapsulation of the non-native substrate proteins and provides a physical environment optimized to promote and accelerate protein folding. GroES binds to the apical surface of the GroEL ring, thereby capping the opening of the GroEL channel. This chain is Co-chaperonin GroES 3, found in Rhizobium meliloti (strain 1021) (Ensifer meliloti).